We begin with the raw amino-acid sequence, 189 residues long: dTTP/UTP pyrophosphatase (189 aa).

Aspartate 70 serves as the catalytic Proton acceptor. A disulfide bridge links cysteine 74 with cysteine 79.

This sequence belongs to the Maf family. YhdE subfamily. In terms of assembly, homodimer. Requires a divalent metal cation as cofactor.

The protein localises to the cytoplasm. The catalysed reaction is dTTP + H2O = dTMP + diphosphate + H(+). It carries out the reaction UTP + H2O = UMP + diphosphate + H(+). It catalyses the reaction CTP + H2O = CMP + diphosphate + H(+). The enzyme catalyses psi-UTP + H2O = psi-UMP + diphosphate + H(+). The catalysed reaction is 5-methyl-CTP + H2O = 5-methyl-CMP + diphosphate + H(+). It carries out the reaction 5-methyl-UTP + H2O = 5-methyl-UMP + diphosphate + H(+). Functionally, nucleoside triphosphate pyrophosphatase that hydrolyzes dTTP and UTP. Can also hydrolyze CTP and the modified nucleotides pseudo-UTP, 5-methyl-CTP (m(5)CTP) and 5-methyl-UTP (m(5)UTP). May have a dual role in cell division arrest and in preventing the incorporation of modified nucleotides into cellular nucleic acids. In Bacillus subtilis (strain 168), this protein is dTTP/UTP pyrophosphatase.